Reading from the N-terminus, the 690-residue chain is Elongation factor G (690 aa).

In terms of domain architecture, tr-type G spans 8-283 (SKCRNIGIMA…AVVDYLPSPN (276 aa)). GTP contacts are provided by residues 17–24 (AHIDAGKT), 81–85 (DTPGH), and 135–138 (NKMD).

It belongs to the TRAFAC class translation factor GTPase superfamily. Classic translation factor GTPase family. EF-G/EF-2 subfamily.

Its subcellular location is the cytoplasm. Catalyzes the GTP-dependent ribosomal translocation step during translation elongation. During this step, the ribosome changes from the pre-translocational (PRE) to the post-translocational (POST) state as the newly formed A-site-bound peptidyl-tRNA and P-site-bound deacylated tRNA move to the P and E sites, respectively. Catalyzes the coordinated movement of the two tRNA molecules, the mRNA and conformational changes in the ribosome. In Anaplasma phagocytophilum (strain HZ), this protein is Elongation factor G.